Here is a 337-residue protein sequence, read N- to C-terminus: Heme A synthase (337 aa).

The next 5 membrane-spanning stretches (helical) occupy residues 6–26 (ITKW…IGGI), 87–107 (FIHR…LIYF), 119–139 (LPYI…WYMV), 154–174 (LAFH…QLIK), and 192–212 (LIFS…GALV). H256 is a heme binding site. The next 3 membrane-spanning stretches (helical) occupy residues 258–278 (LGSY…LTIE), 285–305 (IAYF…ITLL), and 308–328 (VPII…SIII). A heme-binding site is contributed by H316.

This sequence belongs to the COX15/CtaA family. Type 2 subfamily. Interacts with CtaB. It depends on heme b as a cofactor.

Its subcellular location is the cell membrane. It catalyses the reaction Fe(II)-heme o + 2 A + H2O = Fe(II)-heme a + 2 AH2. Its pathway is porphyrin-containing compound metabolism; heme A biosynthesis; heme A from heme O: step 1/1. Catalyzes the conversion of heme O to heme A by two successive hydroxylations of the methyl group at C8. The first hydroxylation forms heme I, the second hydroxylation results in an unstable dihydroxymethyl group, which spontaneously dehydrates, resulting in the formyl group of heme A. The chain is Heme A synthase from Rickettsia akari (strain Hartford).